Here is a 642-residue protein sequence, read N- to C-terminus: Acid beta-fructofuranosidase (642 aa).

Residues 1–22 are Cytoplasmic-facing; it reads MRNDSPYTPLLNASHNNHRRRE. The propeptide at 1–95 is removed in mature form; it reads MRNDSPYTPL…LSGNLVGEGG (95 aa). The helical; Signal-anchor for type II membrane protein transmembrane segment at 23–43 threads the bilayer; the sequence is LLLLFSGLLLLASIIAFSAYI. Over 44–642 the chain is Lumenal; sequence AQPHADADVS…YHPDQKRQTS (599 aa). N-linked (GlcNAc...) asparagine glycosylation is present at N100. Residues 119-122, Q138, W146, 181-182, and 245-246 contribute to the substrate site; these read WMND, WT, and RD. The active site involves D122. N-linked (GlcNAc...) asparagine glycosylation is present at N267. Residues E300 and D333 each contribute to the substrate site. A disulfide bridge links C490 with C538. 2 N-linked (GlcNAc...) asparagine glycosylation sites follow: N491 and N615.

It belongs to the glycosyl hydrolase 32 family. As to quaternary structure, may be present in two forms, a 70 kDa monomer and a heterodimer of the 30 kDa and 38 kDa subunits. The ratio of the levels of the two forms within cells appears to be regulated developmentally.

It is found in the membrane. Its subcellular location is the vacuole. The protein localises to the vacuole lumen. It carries out the reaction Hydrolysis of terminal non-reducing beta-D-fructofuranoside residues in beta-D-fructofuranosides.. It participates in glycan biosynthesis; sucrose metabolism. The sequence is that of Acid beta-fructofuranosidase (VCINV) from Vicia faba (Broad bean).